The sequence spans 371 residues: 4-hydroxy-3-methylbut-2-en-1-yl diphosphate synthase (flavodoxin) (371 aa).

Residues Cys-269, Cys-272, Cys-304, and Glu-311 each contribute to the [4Fe-4S] cluster site.

The protein belongs to the IspG family. The cofactor is [4Fe-4S] cluster.

It carries out the reaction (2E)-4-hydroxy-3-methylbut-2-enyl diphosphate + oxidized [flavodoxin] + H2O + 2 H(+) = 2-C-methyl-D-erythritol 2,4-cyclic diphosphate + reduced [flavodoxin]. The protein operates within isoprenoid biosynthesis; isopentenyl diphosphate biosynthesis via DXP pathway; isopentenyl diphosphate from 1-deoxy-D-xylulose 5-phosphate: step 5/6. Functionally, converts 2C-methyl-D-erythritol 2,4-cyclodiphosphate (ME-2,4cPP) into 1-hydroxy-2-methyl-2-(E)-butenyl 4-diphosphate. The chain is 4-hydroxy-3-methylbut-2-en-1-yl diphosphate synthase (flavodoxin) from Acinetobacter baylyi (strain ATCC 33305 / BD413 / ADP1).